The primary structure comprises 197 residues: Holliday junction branch migration complex subunit RuvA (197 aa).

The domain I stretch occupies residues 1–64 (MIGRLRGIVA…EDSVSLYGFL (64 aa)). A domain II region spans residues 65-143 (REGERRLFRD…QFGAGGALPT (79 aa)). Positions 144–153 (GSGPAPADPL) are flexible linker. Residues 153–197 (LSDATVALQQLGYKPAEAARMARDAFNEGDEVATVIRKALQSALR) are domain III.

Belongs to the RuvA family. In terms of assembly, homotetramer. Forms an RuvA(8)-RuvB(12)-Holliday junction (HJ) complex. HJ DNA is sandwiched between 2 RuvA tetramers; dsDNA enters through RuvA and exits via RuvB. An RuvB hexamer assembles on each DNA strand where it exits the tetramer. Each RuvB hexamer is contacted by two RuvA subunits (via domain III) on 2 adjacent RuvB subunits; this complex drives branch migration. In the full resolvosome a probable DNA-RuvA(4)-RuvB(12)-RuvC(2) complex forms which resolves the HJ.

It localises to the cytoplasm. Functionally, the RuvA-RuvB-RuvC complex processes Holliday junction (HJ) DNA during genetic recombination and DNA repair, while the RuvA-RuvB complex plays an important role in the rescue of blocked DNA replication forks via replication fork reversal (RFR). RuvA specifically binds to HJ cruciform DNA, conferring on it an open structure. The RuvB hexamer acts as an ATP-dependent pump, pulling dsDNA into and through the RuvAB complex. HJ branch migration allows RuvC to scan DNA until it finds its consensus sequence, where it cleaves and resolves the cruciform DNA. This chain is Holliday junction branch migration complex subunit RuvA, found in Stenotrophomonas maltophilia (strain K279a).